The sequence spans 1097 residues: RecBCD enzyme subunit RecC (1097 aa).

Belongs to the RecC family. In terms of assembly, heterotrimer of RecB, RecC and RecD. All subunits contribute to DNA-binding.

Functionally, a helicase/nuclease that prepares dsDNA breaks (DSB) for recombinational DNA repair. Binds to DSBs and unwinds DNA via a highly rapid and processive ATP-dependent bidirectional helicase activity. Holoenzyme degrades any linearized DNA that is unable to undergo homologous recombination. In the holoenzyme this subunit recognizes the wild-type Chi sequence, and when added to isolated RecB increases its ATP-dependent helicase processivity. Unlike the case in E.coli, suppresses RecA-dependent homologous recombination, is instead required for single-strand annealing pathway repair of DSB. The sequence is that of RecBCD enzyme subunit RecC from Mycobacterium tuberculosis (strain ATCC 25618 / H37Rv).